The chain runs to 269 residues: NAD-capped RNA hydrolase NudC (269 aa).

Position 81 (Arg-81) interacts with substrate. Zn(2+)-binding residues include Cys-110, Cys-113, Cys-128, and Cys-131. Tyr-136 is a binding site for substrate. One can recognise a Nudix hydrolase domain in the interval 137–260; sequence PRIFPCIIVA…TIARALIEQT (124 aa). A divalent metal cation is bound by residues Ala-170, Glu-186, and Glu-190. The Nudix box motif lies at 171–192; that stretch reads GFVEVGETLEQCVAREVLEETG. Residue 204–211 participates in substrate binding; it reads QPWAFPSS. Glu-231 contacts a divalent metal cation. Substrate is bound at residue Ala-253.

It belongs to the Nudix hydrolase family. NudC subfamily. Homodimer. Mg(2+) is required as a cofactor. It depends on Mn(2+) as a cofactor. Zn(2+) serves as cofactor.

It catalyses the reaction a 5'-end NAD(+)-phospho-ribonucleoside in mRNA + H2O = a 5'-end phospho-adenosine-phospho-ribonucleoside in mRNA + beta-nicotinamide D-ribonucleotide + 2 H(+). It carries out the reaction NAD(+) + H2O = beta-nicotinamide D-ribonucleotide + AMP + 2 H(+). The enzyme catalyses NADH + H2O = reduced beta-nicotinamide D-ribonucleotide + AMP + 2 H(+). In terms of biological role, mRNA decapping enzyme that specifically removes the nicotinamide adenine dinucleotide (NAD) cap from a subset of mRNAs by hydrolyzing the diphosphate linkage to produce nicotinamide mononucleotide (NMN) and 5' monophosphate mRNA. The NAD-cap is present at the 5'-end of some mRNAs and stabilizes RNA against 5'-processing. Has preference for mRNAs with a 5'-end purine. Catalyzes the hydrolysis of a broad range of dinucleotide pyrophosphates. The sequence is that of NAD-capped RNA hydrolase NudC from Vibrio cholerae serotype O1 (strain ATCC 39315 / El Tor Inaba N16961).